Here is a 439-residue protein sequence, read N- to C-terminus: Homogentisate 1,2-dioxygenase (439 aa).

Histidine 293 (proton acceptor) is an active-site residue. Fe cation-binding residues include histidine 336 and glutamate 342. Homogentisate contacts are provided by tyrosine 351 and histidine 372. Histidine 372 serves as a coordination point for Fe cation.

This sequence belongs to the homogentisate dioxygenase family. As to quaternary structure, hexamer; dimer of trimers. Fe cation serves as cofactor.

It catalyses the reaction homogentisate + O2 = 4-maleylacetoacetate + H(+). Its pathway is amino-acid degradation; L-phenylalanine degradation; acetoacetate and fumarate from L-phenylalanine: step 4/6. In terms of biological role, involved in the catabolism of homogentisate (2,5-dihydroxyphenylacetate or 2,5-OH-PhAc), a central intermediate in the degradation of phenylalanine and tyrosine. Catalyzes the oxidative ring cleavage of the aromatic ring of homogentisate to yield maleylacetoacetate. This is Homogentisate 1,2-dioxygenase from Cupriavidus pinatubonensis (strain JMP 134 / LMG 1197) (Cupriavidus necator (strain JMP 134)).